The chain runs to 251 residues: Imidazole glycerol phosphate synthase subunit HisF (251 aa).

Catalysis depends on residues Asp-11 and Asp-130.

The protein belongs to the HisA/HisF family. As to quaternary structure, heterodimer of HisH and HisF.

The protein localises to the cytoplasm. The enzyme catalyses 5-[(5-phospho-1-deoxy-D-ribulos-1-ylimino)methylamino]-1-(5-phospho-beta-D-ribosyl)imidazole-4-carboxamide + L-glutamine = D-erythro-1-(imidazol-4-yl)glycerol 3-phosphate + 5-amino-1-(5-phospho-beta-D-ribosyl)imidazole-4-carboxamide + L-glutamate + H(+). Its pathway is amino-acid biosynthesis; L-histidine biosynthesis; L-histidine from 5-phospho-alpha-D-ribose 1-diphosphate: step 5/9. Functionally, IGPS catalyzes the conversion of PRFAR and glutamine to IGP, AICAR and glutamate. The HisF subunit catalyzes the cyclization activity that produces IGP and AICAR from PRFAR using the ammonia provided by the HisH subunit. In Chlorobium limicola (strain DSM 245 / NBRC 103803 / 6330), this protein is Imidazole glycerol phosphate synthase subunit HisF.